The following is a 109-amino-acid chain: Nucleoid-associated protein BU482 (109 aa).

The protein belongs to the YbaB/EbfC family. In terms of assembly, homodimer.

It is found in the cytoplasm. The protein resides in the nucleoid. Binds to DNA and alters its conformation. May be involved in regulation of gene expression, nucleoid organization and DNA protection. This Buchnera aphidicola subsp. Acyrthosiphon pisum (strain APS) (Acyrthosiphon pisum symbiotic bacterium) protein is Nucleoid-associated protein BU482.